The primary structure comprises 68 residues: Conotoxin Mr3.3 (68 aa).

The first 19 residues, 1-19 (MSRLGVLLTICLLLFPLTA), serve as a signal peptide directing secretion. A propeptide spanning residues 20–51 (VPLDGDQPADRPAERLQDDISSEHHPHFDSGR) is cleaved from the precursor. The interval 22 to 46 (LDGDQPADRPAERLQDDISSEHHPH) is disordered. Residues 27-46 (PADRPAERLQDDISSEHHPH) show a composition bias toward basic and acidic residues. Cystine bridges form between cysteine 53-cysteine 67, cysteine 54-cysteine 63, and cysteine 59-cysteine 66. Residue proline 65 is modified to 4-hydroxyproline.

It belongs to the conotoxin M superfamily. As to expression, expressed by the venom duct.

The protein localises to the secreted. The protein is Conotoxin Mr3.3 of Conus marmoreus (Marble cone).